The primary structure comprises 163 residues: Nucleotide-binding protein Mmcs_0777 (163 aa).

Belongs to the YajQ family.

Its function is as follows. Nucleotide-binding protein. This is Nucleotide-binding protein Mmcs_0777 from Mycobacterium sp. (strain MCS).